The following is a 129-amino-acid chain: Glycine cleavage system H protein (129 aa).

The Lipoyl-binding domain maps to 23–104; that stretch reads TATIGITQHA…AYAAWLFRLK (82 aa). N6-lipoyllysine is present on Lys-64.

This sequence belongs to the GcvH family. In terms of assembly, the glycine cleavage system is composed of four proteins: P, T, L and H. (R)-lipoate serves as cofactor.

Functionally, the glycine cleavage system catalyzes the degradation of glycine. The H protein shuttles the methylamine group of glycine from the P protein to the T protein. The chain is Glycine cleavage system H protein from Nitrosospira multiformis (strain ATCC 25196 / NCIMB 11849 / C 71).